We begin with the raw amino-acid sequence, 186 residues long: Tail tubular protein A (186 aa).

This sequence belongs to the tail tubular protein gp11 family.

Its subcellular location is the virion. It carries out the reaction alpha,alpha-trehalose + H2O = alpha-D-glucose + beta-D-glucose. Functionally, structural component of the tail, which functions as a receptor binding protein (RBP) and mediates the attachment to the host capsular exopolysaccharides. Displays a depolymerase activity that specifically degrades the polysaccharides of Klebsiella pneumoniae capsule, which allows the phage to reach the host cell membrane and bind the entry receptor. Hydrolyzes trehalose. The chain is Tail tubular protein A from Klebsiella phage KP34 (Bacteriophage KP34).